A 123-amino-acid chain; its full sequence is Small ribosomal subunit protein uS12 (123 aa).

The segment at 1–31 (MPTINQLIRKPREAQKARDKAPALQASPQKR) is disordered. The segment covering 10–21 (KPREAQKARDKA) has biased composition (basic and acidic residues). 3-methylthioaspartic acid is present on Asp89.

This sequence belongs to the universal ribosomal protein uS12 family. As to quaternary structure, part of the 30S ribosomal subunit. Contacts proteins S8 and S17. May interact with IF1 in the 30S initiation complex.

Functionally, with S4 and S5 plays an important role in translational accuracy. In terms of biological role, interacts with and stabilizes bases of the 16S rRNA that are involved in tRNA selection in the A site and with the mRNA backbone. Located at the interface of the 30S and 50S subunits, it traverses the body of the 30S subunit contacting proteins on the other side and probably holding the rRNA structure together. The combined cluster of proteins S8, S12 and S17 appears to hold together the shoulder and platform of the 30S subunit. This chain is Small ribosomal subunit protein uS12, found in Xanthobacter autotrophicus (strain ATCC BAA-1158 / Py2).